A 108-amino-acid chain; its full sequence is Phosphoribosyl-ATP pyrophosphatase (108 aa).

It belongs to the PRA-PH family.

Its subcellular location is the cytoplasm. The enzyme catalyses 1-(5-phospho-beta-D-ribosyl)-ATP + H2O = 1-(5-phospho-beta-D-ribosyl)-5'-AMP + diphosphate + H(+). Its pathway is amino-acid biosynthesis; L-histidine biosynthesis; L-histidine from 5-phospho-alpha-D-ribose 1-diphosphate: step 2/9. The protein is Phosphoribosyl-ATP pyrophosphatase of Aromatoleum aromaticum (strain DSM 19018 / LMG 30748 / EbN1) (Azoarcus sp. (strain EbN1)).